A 159-amino-acid chain; its full sequence is uncharacterized protein (159 aa).

Positions 1 to 13 (MTQPTRPSVTCDQ) are enriched in polar residues. The segment at 1 to 57 (MTQPTRPSVTCDQGSSTIGGTAAQATTSSSATSGSNYQRDRLGRRPEIGVGGQPQIC) is disordered. The span at 14 to 35 (GSSTIGGTAAQATTSSSATSGS) shows a compositional bias: low complexity. Basic and acidic residues predominate over residues 38-47 (QRDRLGRRPE).

This is an uncharacterized protein from Homo sapiens (Human).